A 210-amino-acid chain; its full sequence is Urease accessory protein UreG (210 aa).

GTP is bound at residue 14-21 (GPVGSGKT).

Belongs to the SIMIBI class G3E GTPase family. UreG subfamily. Homodimer. UreD, UreF and UreG form a complex that acts as a GTP-hydrolysis-dependent molecular chaperone, activating the urease apoprotein by helping to assemble the nickel containing metallocenter of UreC. The UreE protein probably delivers the nickel.

It is found in the cytoplasm. Its function is as follows. Facilitates the functional incorporation of the urease nickel metallocenter. This process requires GTP hydrolysis, probably effectuated by UreG. In Rhodopseudomonas palustris (strain BisB5), this protein is Urease accessory protein UreG.